Consider the following 259-residue polypeptide: Thiazole synthase (259 aa).

Lys99 (schiff-base intermediate with DXP) is an active-site residue. 1-deoxy-D-xylulose 5-phosphate is bound by residues Gly160, 187–188 (AG), and 209–210 (NT).

It belongs to the ThiG family. In terms of assembly, homotetramer. Forms heterodimers with either ThiH or ThiS.

The protein resides in the cytoplasm. It carries out the reaction [ThiS sulfur-carrier protein]-C-terminal-Gly-aminoethanethioate + 2-iminoacetate + 1-deoxy-D-xylulose 5-phosphate = [ThiS sulfur-carrier protein]-C-terminal Gly-Gly + 2-[(2R,5Z)-2-carboxy-4-methylthiazol-5(2H)-ylidene]ethyl phosphate + 2 H2O + H(+). The protein operates within cofactor biosynthesis; thiamine diphosphate biosynthesis. Its function is as follows. Catalyzes the rearrangement of 1-deoxy-D-xylulose 5-phosphate (DXP) to produce the thiazole phosphate moiety of thiamine. Sulfur is provided by the thiocarboxylate moiety of the carrier protein ThiS. In vitro, sulfur can be provided by H(2)S. The protein is Thiazole synthase of Solibacter usitatus (strain Ellin6076).